Reading from the N-terminus, the 361-residue chain is MNHETNYHALLIADTPLIDVRAPIEFQQGAMPGAINLPLMMDDERAAVGTCYKRQGADAALSLGHRLVCGDIRQQRLEAWKAAYQRFPNGYLCCARGGQRSHIVQRWLQETGIDCPLIEGGYKALRQTAIQATWQLVQKPILLIGGCTGSGKTQLVRQQPNGVDLEGLARHRGSSFGRTLKPQLSQASFENKLAVELLKINARQTLKRWVLEDEGRTIGANHLPECLRERMAQAPITVVEDPFALRLERLREEYFIRMHHDFIHAYGDEGGWQAYSEYLHHGLFAIRRRLGLQRFAELTNTLDMALADQLSNGSTDGHMAWLVPLLNEYYDPMYRYQLEKKAANIVFRGTWQEVANWLKAQ.

The Rhodanese domain maps to 11-134; sequence LIADTPLIDV…LRQTAIQATW (124 aa). The active-site S-selanylcysteine intermediate is Cys94.

It belongs to the SelU family. Monomer.

The enzyme catalyses 5-methylaminomethyl-2-thiouridine(34) in tRNA + selenophosphate + (2E)-geranyl diphosphate + H2O + H(+) = 5-methylaminomethyl-2-selenouridine(34) in tRNA + (2E)-thiogeraniol + phosphate + diphosphate. It carries out the reaction 5-methylaminomethyl-2-thiouridine(34) in tRNA + (2E)-geranyl diphosphate = 5-methylaminomethyl-S-(2E)-geranyl-thiouridine(34) in tRNA + diphosphate. It catalyses the reaction 5-methylaminomethyl-S-(2E)-geranyl-thiouridine(34) in tRNA + selenophosphate + H(+) = 5-methylaminomethyl-2-(Se-phospho)selenouridine(34) in tRNA + (2E)-thiogeraniol. The catalysed reaction is 5-methylaminomethyl-2-(Se-phospho)selenouridine(34) in tRNA + H2O = 5-methylaminomethyl-2-selenouridine(34) in tRNA + phosphate. Its function is as follows. Involved in the post-transcriptional modification of the uridine at the wobble position (U34) of tRNA(Lys), tRNA(Glu) and tRNA(Gln). Catalyzes the conversion of 2-thiouridine (S2U-RNA) to 2-selenouridine (Se2U-RNA). Acts in a two-step process involving geranylation of 2-thiouridine (S2U) to S-geranyl-2-thiouridine (geS2U) and subsequent selenation of the latter derivative to 2-selenouridine (Se2U) in the tRNA chain. This chain is tRNA 2-selenouridine synthase, found in Salmonella arizonae (strain ATCC BAA-731 / CDC346-86 / RSK2980).